The following is a 74-amino-acid chain: Small ribosomal subunit protein bS21 (74 aa).

This sequence belongs to the bacterial ribosomal protein bS21 family.

This Coxiella burnetii (strain Dugway 5J108-111) protein is Small ribosomal subunit protein bS21.